Consider the following 126-residue polypeptide: Large ribosomal subunit protein bL19 (126 aa).

The protein belongs to the bacterial ribosomal protein bL19 family.

Its function is as follows. This protein is located at the 30S-50S ribosomal subunit interface and may play a role in the structure and function of the aminoacyl-tRNA binding site. The sequence is that of Large ribosomal subunit protein bL19 from Bordetella petrii (strain ATCC BAA-461 / DSM 12804 / CCUG 43448).